Consider the following 161-residue polypeptide: uncharacterized protein (161 aa).

An RING-type zinc finger spans residues 72–134 (CAICLDNLQN…EAQQTCPTCR (63 aa)). Residues 140–161 (DKEVEEEERQRNLEELHDSMYG) are disordered.

This is an uncharacterized protein from Caenorhabditis elegans.